An 823-amino-acid chain; its full sequence is MKLFGFGSRRGQTAEGSIDHVYTGSGYRIRDSELQKIHRAAVKGDAAEVERCLARRSGDLDARDKQHRTALHLACASGHVQVVTLLVNRKCQIDICDKENRTPLIQAVHCQEEACAVILLKHGANPNLKDIYGNTALHYAVYSESTSLAEKLLSHGAHIEALDKDSNTPLLFAIICKKEKMVEFLLKKKASTHAVDRLRRSALMLAVYYDSPGIVSILLKQNIDVFAQDMCGRDAEDYAISHHLTKIQQQILEHKQKILKKEKSDVGSSDESAVSIFHELRVDSLPASDDKDLSVATKQCVPEKVSEPLPGPSHEKGNRIVNGQGEGPPAKHPSLKPTTGVEDPAVKGAVQRKNVQTLRAEQALPVASEEEQERHERSEKKQPQVKKGNNTNKSEKIQLSENICDSTSSAAAGRLTQQRKIGKTYPQQFPKKLKEEHDKCTLKQENEEKTNVNMLYKKNREELERKEKQYKKEVEAKQLEPTVQSLEMKSKTARNTPNRDFHNHEETKGLMDENCILKADIAILRQEICTMKNDNLEKENKYLKDIKIVKETNAALEKYIKLNEEMITETAFRYQQELNDLKAENTRLNAELLKEKESKKRLEADIESYQSRLAAAIGKHSESVKTERNVKLALERTQDVSVQVEMSSAISKVKDENEFLTEQLSETQIKFNALKDKFRKTRDSLRKKSLALETVQNDLRKTQQQTQEMKEMYQNAEAKVNNSTGKWNCVEERICHLQRENAWLVQQLDDVHQKEDHKEIVTNIQRGFIESGKKDLVLEEKSKKLMNECDHLKESLFQYEREKAEGVVSIKEDKYFQTSRKKI.

ANK repeat units follow at residues 32 to 65 (SELQ…ARDK), 66 to 95 (QHRT…QIDI), 99 to 128 (ENRT…NPNL), 132 to 161 (YGNT…HIEA), 165 to 194 (DSNT…STHA), and 198 to 227 (LRRS…DVFA). 2 disordered regions span residues 302 to 343 (PEKV…GVED) and 355 to 401 (VQTL…QLSE). Residues 372 to 382 (QERHERSEKKQ) are compositionally biased toward basic and acidic residues. 3 coiled-coil regions span residues 431–480 (KKLK…KQLE), 565–724 (EMIT…NNST), and 776–805 (LVLE…EKAE).

In Homo sapiens (Human), this protein is Ankyrin repeat domain-containing protein 20B (ANKRD20A8P).